Consider the following 336-residue polypeptide: Holliday junction branch migration complex subunit RuvB (336 aa).

The tract at residues 4–184 is large ATPase domain (RuvB-L); the sequence is ADRLISAGAT…FGIVQRLEFY (181 aa). Residues I23, R24, G65, K68, T69, T70, 131–133, R174, Y184, and R221 each bind ATP; that span reads EDY. Residue T69 coordinates Mg(2+). A small ATPAse domain (RuvB-S) region spans residues 185-255; that stretch reads QVPDLQHIVG…IAAQALDMLN (71 aa). The head domain (RuvB-H) stretch occupies residues 258 to 336; that stretch reads AEGFDYMDRK…HFGITPPEMP (79 aa). Residues R294, R313, and R318 each coordinate DNA.

Belongs to the RuvB family. As to quaternary structure, homohexamer. Forms an RuvA(8)-RuvB(12)-Holliday junction (HJ) complex. HJ DNA is sandwiched between 2 RuvA tetramers; dsDNA enters through RuvA and exits via RuvB. An RuvB hexamer assembles on each DNA strand where it exits the tetramer. Each RuvB hexamer is contacted by two RuvA subunits (via domain III) on 2 adjacent RuvB subunits; this complex drives branch migration. In the full resolvosome a probable DNA-RuvA(4)-RuvB(12)-RuvC(2) complex forms which resolves the HJ.

It localises to the cytoplasm. It carries out the reaction ATP + H2O = ADP + phosphate + H(+). Functionally, the RuvA-RuvB-RuvC complex processes Holliday junction (HJ) DNA during genetic recombination and DNA repair, while the RuvA-RuvB complex plays an important role in the rescue of blocked DNA replication forks via replication fork reversal (RFR). RuvA specifically binds to HJ cruciform DNA, conferring on it an open structure. The RuvB hexamer acts as an ATP-dependent pump, pulling dsDNA into and through the RuvAB complex. RuvB forms 2 homohexamers on either side of HJ DNA bound by 1 or 2 RuvA tetramers; 4 subunits per hexamer contact DNA at a time. Coordinated motions by a converter formed by DNA-disengaged RuvB subunits stimulates ATP hydrolysis and nucleotide exchange. Immobilization of the converter enables RuvB to convert the ATP-contained energy into a lever motion, pulling 2 nucleotides of DNA out of the RuvA tetramer per ATP hydrolyzed, thus driving DNA branch migration. The RuvB motors rotate together with the DNA substrate, which together with the progressing nucleotide cycle form the mechanistic basis for DNA recombination by continuous HJ branch migration. Branch migration allows RuvC to scan DNA until it finds its consensus sequence, where it cleaves and resolves cruciform DNA. In Salmonella arizonae (strain ATCC BAA-731 / CDC346-86 / RSK2980), this protein is Holliday junction branch migration complex subunit RuvB.